The following is a 359-amino-acid chain: N-acetyl-gamma-glutamyl-phosphate reductase (359 aa).

C162 is an active-site residue.

It belongs to the NAGSA dehydrogenase family. Type 1 subfamily.

It is found in the cytoplasm. It catalyses the reaction N-acetyl-L-glutamate 5-semialdehyde + phosphate + NADP(+) = N-acetyl-L-glutamyl 5-phosphate + NADPH + H(+). The protein operates within amino-acid biosynthesis; L-arginine biosynthesis; N(2)-acetyl-L-ornithine from L-glutamate: step 3/4. Its function is as follows. Catalyzes the NADPH-dependent reduction of N-acetyl-5-glutamyl phosphate to yield N-acetyl-L-glutamate 5-semialdehyde. The polypeptide is N-acetyl-gamma-glutamyl-phosphate reductase (Prochlorococcus marinus (strain SARG / CCMP1375 / SS120)).